We begin with the raw amino-acid sequence, 194 residues long: Imidazoleglycerol-phosphate dehydratase (194 aa).

The protein belongs to the imidazoleglycerol-phosphate dehydratase family.

It is found in the cytoplasm. It carries out the reaction D-erythro-1-(imidazol-4-yl)glycerol 3-phosphate = 3-(imidazol-4-yl)-2-oxopropyl phosphate + H2O. It participates in amino-acid biosynthesis; L-histidine biosynthesis; L-histidine from 5-phospho-alpha-D-ribose 1-diphosphate: step 6/9. This is Imidazoleglycerol-phosphate dehydratase from Bacillus pumilus (strain SAFR-032).